The primary structure comprises 138 residues: Basic phospholipase A2 Tpu-G6D49 (138 aa).

The N-terminal stretch at Met-1–Gly-16 is a signal peptide. 7 cysteine pairs are disulfide-bonded: Cys-42–Cys-131, Cys-44–Cys-60, Cys-59–Cys-111, Cys-65–Cys-138, Cys-66–Cys-104, Cys-73–Cys-97, and Cys-91–Cys-102. Residues Tyr-43, Gly-45, and Gly-47 each contribute to the Ca(2+) site. The active site involves His-63. Asp-64 serves as a coordination point for Ca(2+). The active site involves Asp-105.

As to quaternary structure, monomer. Ca(2+) is required as a cofactor. As to expression, expressed by the venom gland.

It localises to the secreted. It catalyses the reaction a 1,2-diacyl-sn-glycero-3-phosphocholine + H2O = a 1-acyl-sn-glycero-3-phosphocholine + a fatty acid + H(+). Snake venom phospholipase A2 (PLA2) that impairs hemostasis. It weakly inhibits ADP-induced platelet aggregation when tested on platelet rich plasma from human and rabbit blood (15-25% of inhibition at 5-10 ug of enzyme), and dose-dependently inhibits blood coagulation, possibly by inhibiting thrombin activation. Also induces local edema a few hours after injection in the hind foot. Exhibits high hydrolytic activities toward L-dipalmitoyl phosphatidylcholine. PLA2 catalyzes the calcium-dependent hydrolysis of the 2-acyl groups in 3-sn-phosphoglycerides. The chain is Basic phospholipase A2 Tpu-G6D49 from Craspedocephalus puniceus (Flat-nosed pitviper).